The sequence spans 261 residues: GTP cyclohydrolase FolE2 (261 aa).

It belongs to the GTP cyclohydrolase IV family.

It catalyses the reaction GTP + H2O = 7,8-dihydroneopterin 3'-triphosphate + formate + H(+). It participates in cofactor biosynthesis; 7,8-dihydroneopterin triphosphate biosynthesis; 7,8-dihydroneopterin triphosphate from GTP: step 1/1. In terms of biological role, converts GTP to 7,8-dihydroneopterin triphosphate. In Herminiimonas arsenicoxydans, this protein is GTP cyclohydrolase FolE2.